Here is a 34-residue protein sequence, read N- to C-terminus: Peptide 9797 (34 aa).

Expressed by the venom gland.

It is found in the secreted. The polypeptide is Peptide 9797 (Tityus stigmurus (Brazilian scorpion)).